We begin with the raw amino-acid sequence, 156 residues long: Protein eva-1 homolog A (156 aa).

The helical transmembrane segment at alanine 40–methionine 60 threads the bilayer. The interval aspartate 79–serine 100 is disordered. Over residues aspartate 84–alanine 96 the composition is skewed to acidic residues. At threonine 110 the chain carries Phosphothreonine. Serine 118 is modified (phosphoserine).

Belongs to the EVA1 family.

The protein resides in the endoplasmic reticulum membrane. The protein localises to the lysosome membrane. Acts as a regulator of programmed cell death, mediating both autophagy and apoptosis. The chain is Protein eva-1 homolog A (Eva1a) from Mus musculus (Mouse).